The sequence spans 443 residues: Aklavinone 7-beta-L-rhodosaminyltransferase (443 aa).

Positions 1–23 are cleaved as a signal peptide; that stretch reads MRVLLTSFALDAHFNGSVPLAWA.

Belongs to the glycosyltransferase 28 family.

The enzyme catalyses dTDP-beta-L-rhodosamine + aklavinone = aclacinomycin T + dTDP + 2 H(+). With respect to regulation, the activity of AknS is substantially increased by the addition of the accessory protein AknT. Its function is as follows. Involved in the biosynthesis of the anthracycline antitumor agent aclacinomycin A. Catalyzes the transfer of the proximal deoxyhexose, L-rhodosamine, from dTDP-beta-L-rhodosamine to the C7-OH of aklavinone aglycone to yield aclacinomycin T (rhodosaminyl-aklavinone). It can also use dTDP-2-deoxy-beta-L-fucose, TDP-2-deoxyfucose, dTDP-4-amino-2-deoxyrhamnose, TDP-L-rhodosamine as sugar donor and epsilon-rhodomycinone as sugar acceptor. The protein is Aklavinone 7-beta-L-rhodosaminyltransferase of Streptomyces galilaeus.